The primary structure comprises 133 residues: Bacteriohemerythrin (133 aa).

Residues His19, His56, Glu60, His75, His79, His115, and Asp120 each coordinate Fe cation.

Belongs to the hemerythrin family. Monomer.

In terms of biological role, oxygen-binding protein. May be involved in a storage mechanism or for delivery to oxygen-requiring enzymes. The oxygen-binding site contains two iron atoms. In Campylobacter jejuni subsp. jejuni serotype O:6 (strain 81116 / NCTC 11828), this protein is Bacteriohemerythrin.